A 205-amino-acid chain; its full sequence is Outer-membrane lipoprotein LolB (205 aa).

The N-terminal stretch at 1-17 (MFLRHCITFTMIALLAG) is a signal peptide. A lipid anchor (N-palmitoyl cysteine) is attached at C18. C18 carries the S-diacylglycerol cysteine lipid modification.

It belongs to the LolB family. In terms of assembly, monomer.

The protein localises to the cell outer membrane. In terms of biological role, plays a critical role in the incorporation of lipoproteins in the outer membrane after they are released by the LolA protein. This Pseudomonas putida (strain ATCC 700007 / DSM 6899 / JCM 31910 / BCRC 17059 / LMG 24140 / F1) protein is Outer-membrane lipoprotein LolB.